The primary structure comprises 153 residues: 6,7-dimethyl-8-ribityllumazine synthase (153 aa).

5-amino-6-(D-ribitylamino)uracil-binding positions include phenylalanine 22, 56–58 (AFE), and 80–82 (AVI). 85-86 (ST) is a (2S)-2-hydroxy-3-oxobutyl phosphate binding site. Histidine 88 functions as the Proton donor in the catalytic mechanism. Phenylalanine 113 is a 5-amino-6-(D-ribitylamino)uracil binding site. (2S)-2-hydroxy-3-oxobutyl phosphate is bound at residue arginine 127.

This sequence belongs to the DMRL synthase family.

It catalyses the reaction (2S)-2-hydroxy-3-oxobutyl phosphate + 5-amino-6-(D-ribitylamino)uracil = 6,7-dimethyl-8-(1-D-ribityl)lumazine + phosphate + 2 H2O + H(+). Its pathway is cofactor biosynthesis; riboflavin biosynthesis; riboflavin from 2-hydroxy-3-oxobutyl phosphate and 5-amino-6-(D-ribitylamino)uracil: step 1/2. Functionally, catalyzes the formation of 6,7-dimethyl-8-ribityllumazine by condensation of 5-amino-6-(D-ribitylamino)uracil with 3,4-dihydroxy-2-butanone 4-phosphate. This is the penultimate step in the biosynthesis of riboflavin. This chain is 6,7-dimethyl-8-ribityllumazine synthase, found in Clostridium botulinum (strain Alaska E43 / Type E3).